The primary structure comprises 144 residues: Neuritin-A (144 aa).

The N-terminal stretch at 1-27 (MGLKLSGRYIFLVLAVHLAYLLQAVKA) is a signal peptide. Serine 114 carries the GPI-anchor amidated serine lipid modification. Positions 115–144 (AGAPGQRLLFPAFLPLLMVFLSTLFILVLQ) are cleaved as a propeptide — removed in mature form.

Belongs to the neuritin family. As to expression, expressed in sensory regions of the brain including the visual, auditory and olfactory systems. Within the retina, only expressed in the retinal ganglion cells. Concentrated in axon tracts including retinal axons.

Its subcellular location is the cell membrane. Its function is as follows. Modulates postsynaptic dendritic arbor elaboration and synaptic maturation. This is Neuritin-A (nrn1-a) from Xenopus laevis (African clawed frog).